The following is a 124-amino-acid chain: Small ribosomal subunit protein uS12 (124 aa).

The residue at position 89 (Asp89) is a 3-methylthioaspartic acid.

The protein belongs to the universal ribosomal protein uS12 family. In terms of assembly, part of the 30S ribosomal subunit. Contacts proteins S8 and S17. May interact with IF1 in the 30S initiation complex.

Functionally, with S4 and S5 plays an important role in translational accuracy. Interacts with and stabilizes bases of the 16S rRNA that are involved in tRNA selection in the A site and with the mRNA backbone. Located at the interface of the 30S and 50S subunits, it traverses the body of the 30S subunit contacting proteins on the other side and probably holding the rRNA structure together. The combined cluster of proteins S8, S12 and S17 appears to hold together the shoulder and platform of the 30S subunit. This Shewanella oneidensis (strain ATCC 700550 / JCM 31522 / CIP 106686 / LMG 19005 / NCIMB 14063 / MR-1) protein is Small ribosomal subunit protein uS12.